The sequence spans 412 residues: Putative pectate lyase 11 (412 aa).

An N-terminal signal peptide occupies residues Met1–Ala24. The Ca(2+) site is built by Asp210, Asp234, and Asp238. Arg290 is a catalytic residue.

Belongs to the polysaccharide lyase 1 family. The cofactor is Ca(2+).

The catalysed reaction is Eliminative cleavage of (1-&gt;4)-alpha-D-galacturonan to give oligosaccharides with 4-deoxy-alpha-D-galact-4-enuronosyl groups at their non-reducing ends.. Its pathway is glycan metabolism; pectin degradation; 2-dehydro-3-deoxy-D-gluconate from pectin: step 2/5. In Arabidopsis thaliana (Mouse-ear cress), this protein is Putative pectate lyase 11.